The primary structure comprises 96 residues: MEPYILQDEELNELVVKIPGWEIKSKQIQREFNFANFIEAFAFMTKVALICEKYNHHPNWENVYAKVIIKLNTHDLGGITNLDQTLASEINKIFDQ.

Belongs to the pterin-4-alpha-carbinolamine dehydratase family.

The catalysed reaction is (4aS,6R)-4a-hydroxy-L-erythro-5,6,7,8-tetrahydrobiopterin = (6R)-L-erythro-6,7-dihydrobiopterin + H2O. This Prochlorococcus marinus (strain MIT 9301) protein is Putative pterin-4-alpha-carbinolamine dehydratase.